The sequence spans 3550 residues: Zinc finger homeobox protein 4 (3550 aa).

Met1 is subject to N-acetylmethionine. Disordered regions lie at residues 1–54 (METC…LKTD), 426–479 (HLSS…AYSN), and 521–614 (TSSS…IECP). Residues 9 to 20 (ISRQENGQSTSK) show a composition bias toward polar residues. Basic and acidic residues-rich tracts occupy residues 39-54 (EPDRENSSSHDNLKTD) and 433-451 (KMSESKDQENNCERPKEST). The span at 467-479 (EPGDEDEEDAYSN) shows a compositional bias: acidic residues. Polar residues-rich tracts occupy residues 542–553 (GRSNGNVTNSYS) and 566–576 (RDGTTAAPSET). C2H2-type zinc fingers lie at residues 611 to 634 (IECPKCDTVLGSSRSLGGHMTMMH), 642 to 665 (LKCPKCNWHYKYQQTLEAHMKEKH), and 697 to 721 (FRCEVCNYSTTTKGNLSIHMQSDKH). The tract at residues 739–763 (HSAPTPNTSLSGCGTPSPSKPKQKP) is disordered. Residues 742-752 (PTPNTSLSGCG) are compositionally biased toward polar residues. C2H2-type zinc fingers lie at residues 765 to 787 (RRCEVCDYETNVARNLRIHMTSE), 915 to 939 (YQCKLCNYNTQLKANFQLHCKTDKH), 971 to 993 (LKCNACDYYTNSVDKLRLHTTNH), and 1019 to 1043 (YYCAVCDYSSKIKLNLVQHVRSVKH). A disordered region spans residues 1100-1142 (KAASEEPSEDAGDPLKPPTVAEDDEKEAHKRDNSEGKISTKDP). The segment covering 1125–1142 (KEAHKRDNSEGKISTKDP) has biased composition (basic and acidic residues). Lys1165 participates in a covalent cross-link: Glycyl lysine isopeptide (Lys-Gly) (interchain with G-Cter in SUMO2). 2 C2H2-type zinc fingers span residues 1188–1211 (YQYPCCNYNSRDQSRIQMHVLSQH) and 1217–1240 (ICCPLCQDVLSNKMHLQLHLTHLH). The interval 1271–1339 (APEKSEQDPP…EWNKTSSKDV (69 aa)) is disordered. Basic and acidic residues predominate over residues 1297 to 1326 (VDDKSMSGLEDSKVGVEIKNEEQKPAKEPV). A Glycyl lysine isopeptide (Lys-Gly) (interchain with G-Cter in SUMO2) cross-link involves residue Lys1315. 2 C2H2-type zinc fingers span residues 1368–1390 (YRCNHCSLAFKTMQKLQIHSQYH) and 1396–1419 (TMCTLCQRSFRTFQALKKHLEAGH). The disordered stretch occupies residues 1467-1492 (EGKASPVESDGSSIPDDLGLEPKRTL). A C2H2-type 12 zinc finger spans residues 1512 to 1538 (YKCTVCKESFTQKNILLVHYNSVSHLH). A Glycyl lysine isopeptide (Lys-Gly) (interchain with G-Cter in SUMO2) cross-link involves residue Lys1562. Residues 1564 to 1588 (YKCSTCSVAYSQSSTLEIHMRSVLH) form a C2H2-type 13 zinc finger. The interval 1779–1873 (PQLQPQNQQP…CIPPPRIASG (95 aa)) is disordered. Over residues 1792–1808 (QQQQPQQQPSKLLKQEQ) the composition is skewed to low complexity. Lys1805 participates in a covalent cross-link: Glycyl lysine isopeptide (Lys-Gly) (interchain with G-Cter in SUMO2). Positions 1823-1860 (PSYKEAEEVTEKQEKPKQEFINDTEGLKDSKDIKKQKS) are enriched in basic and acidic residues. The C2H2-type 14 zinc-finger motif lies at 1916 to 1939 (LECGICGKLFSNVLILKSHQEHVH). The interval 1984–2006 (KIPNTVSAPLQAPPPTPPSAPQQ) is disordered. Residues 1994-2003 (QAPPPTPPSA) are compositionally biased toward pro residues. 2 consecutive DNA-binding regions (homeobox) follow at residues 2069-2128 (FKRP…RQRN) and 2166-2225 (KRSS…RKSY). A C2H2-type 15; degenerate zinc finger spans residues 2252–2276 (YQCKKCNVVFPRIFDLITHQKKQCY). Over residues 2318–2331 (TLVASSGSGTSTPL) the composition is skewed to polar residues. The tract at residues 2318 to 2412 (TLVASSGSGT…SQTPIPSSPL (95 aa)) is disordered. Residues 2337-2355 (PEPEKNSPKTEYPGEKTKQ) show a composition bias toward basic and acidic residues. Positions 2356 to 2376 (SDPSLPQGTKSAPSSVLTSSE) are enriched in polar residues. Pro residues predominate over residues 2383–2392 (PQPPTQPPKQ). The segment covering 2401-2412 (SASQTPIPSSPL) has biased composition (polar residues). The segment at 2430–2452 (YPCDQCTLAFPTLELWKEHQHMH) adopts a C2H2-type 16 zinc-finger fold. The segment covering 2490–2508 (GSSLTQMPPQTSTAHTTAP) has biased composition (polar residues). The segment at 2490-2545 (GSSLTQMPPQTSTAHTTAPASVAASLKRKLEDKEDNNCSEKEGGNSGEDQHRDKRL) is disordered. A compositionally biased stretch (basic and acidic residues) spans 2517–2541 (RKLEDKEDNNCSEKEGGNSGEDQHR). Residues 2542–2601 (DKRLRTTITPEQLEILYEKYLLDSNPTRKMLDHIAREVGLKKRVVQVWFQNTRARERKGQ) constitute a DNA-binding region (homeobox 3). The C2H2-type 17 zinc-finger motif lies at 2612 to 2635 (KRCPFCRALFKAKSALESHIRSRH). Position 2645 is a phosphoserine (Ser2645). Disordered stretches follow at residues 2746–2791 (AISD…ATTP) and 2810–2866 (HFND…PGHK). Positions 2781-2791 (LDSLQKPATTP) are enriched in polar residues. The segment covering 2811 to 2820 (FNDKDGDHDQ) has biased composition (basic and acidic residues). Over residues 2843-2855 (PSSPNPFGSSNPF) the composition is skewed to low complexity. Residues 2865-2924 (HKRFRTQMSNLQLKVLKACFSDYRTPTMQECEMLGNEIGLPKRVVQVWFQNARAKERKFK) constitute a DNA-binding region (homeobox 4). The C2H2-type 18 zinc finger occupies 2943–2967 (PECTLCGVKYSARLSIRDHIFSKQH). Disordered regions lie at residues 3051 to 3156 (PSSL…EEKI) and 3261 to 3318 (QDSL…VQLD). The span at 3058–3068 (PQNSNTLTSPG) shows a compositional bias: polar residues. The span at 3075–3088 (PSSATSSPALSLSS) shows a compositional bias: low complexity. Pro residues predominate over residues 3097-3109 (TPPPPPPPPPPPS). Residues 3136-3156 (IKEEESEAIKPEKHPKKEEKI) show a composition bias toward basic and acidic residues. Lys3137 is covalently cross-linked (Glycyl lysine isopeptide (Lys-Gly) (interchain with G-Cter in SUMO2)). The stretch at 3248 to 3277 (ALLQQYQQYQQSLQDSLQKQQKQQQEQQQK) forms a coiled coil. Residues 3261-3276 (QDSLQKQQKQQQEQQQ) are compositionally biased toward low complexity. Residues 3298-3318 (SETKEEKSTAPESTKEEVQLD) show a composition bias toward basic and acidic residues. A C2H2-type 19; degenerate zinc finger spans residues 3337–3361 (FVCRKCQMMFTDEDATVNHQKSFCY). The C2H2-type 20 zinc-finger motif lies at 3381–3405 (YQCLACDLALSGNEALSQHLQSSLH). A disordered region spans residues 3424-3445 (LPHSVCSPPPNTSSTSPSAASS). The span at 3435 to 3445 (TSSTSPSAASS) shows a compositional bias: low complexity.

The protein belongs to the krueppel C2H2-type zinc-finger protein family. In terms of tissue distribution, expressed in brain, heart, lung, muscle and small intestine. No expression detected in undifferentiated P19 cells, however, expression was seen following retinoic acid treatment to induce neuronal differentiation. Expressed in undifferentiated C2C12 cells, following induction of muscle differentiation in a low-serum medium, expression levels were decreased.

It localises to the nucleus. Functionally, may play a role in neural and muscle differentiation. May be involved in transcriptional regulation. The sequence is that of Zinc finger homeobox protein 4 (Zfhx4) from Mus musculus (Mouse).